A 384-amino-acid chain; its full sequence is Conidiophore development protein hymA (384 aa).

Over residues 362 to 374 (EPIEPSRSAREPS) the composition is skewed to basic and acidic residues. Residues 362–384 (EPIEPSRSAREPSRSTANTTTVA) are disordered.

It belongs to the Mo25 family.

The protein resides in the cytoplasm. Required for conidiophore development. The protein is Conidiophore development protein hymA (hymA) of Emericella nidulans (strain FGSC A4 / ATCC 38163 / CBS 112.46 / NRRL 194 / M139) (Aspergillus nidulans).